Here is a 105-residue protein sequence, read N- to C-terminus: Small ribosomal subunit protein uS10 (105 aa).

Belongs to the universal ribosomal protein uS10 family. Part of the 30S ribosomal subunit.

Its function is as follows. Involved in the binding of tRNA to the ribosomes. This Cyanothece sp. (strain PCC 7425 / ATCC 29141) protein is Small ribosomal subunit protein uS10.